The sequence spans 271 residues: Orotidine 5'-phosphate decarboxylase (271 aa).

The Proton donor role is filled by K95.

Belongs to the OMP decarboxylase family. Type 2 subfamily.

The catalysed reaction is orotidine 5'-phosphate + H(+) = UMP + CO2. Its pathway is pyrimidine metabolism; UMP biosynthesis via de novo pathway; UMP from orotate: step 2/2. The chain is Orotidine 5'-phosphate decarboxylase from Ralstonia pickettii (strain 12J).